Consider the following 143-residue polypeptide: MNTVQILVVILITTALSFLVFQLWYYAENYEYILRYNDTYSNLQFARSANINFDDLTVFDPNDNVFNVEEKWRCASTNNNIFYAVSTFGFLSTESTGINLTYTNSRDCIIDLFSRIIKIVYDPCTVETSNDCRLLRLLMANTS.

Residues 1–21 (MNTVQILVVILITTALSFLVF) form a helical; Signal-anchor for type II membrane protein membrane-spanning segment. Residues 22–143 (QLWYYAENYE…LLRLLMANTS (122 aa)) are Virion surface-facing.

It belongs to the poxviridae A28 protein family. In terms of processing, contains two intramolecular disulfide bonds. They are created by the viral disulfide bond formation pathway, a poxvirus-specific pathway that operates on the cytoplasmic side of the MV membranes.

The protein localises to the virion membrane. Functionally, envelope protein required for virus entry into host cell and for cell-cell fusion (syncytium formation). This is Envelope protein A28 homolog from Amsacta (AmEPV).